The following is a 327-amino-acid chain: DNA-directed RNA polymerase subunit alpha (327 aa).

Residues 1-242 are alpha N-terminal domain (alpha-NTD); sequence MRKFLKYQLD…AHLEPIVNID (242 aa). Residues 259 to 327 form an alpha C-terminal domain (alpha-CTD) region; sequence KRQNASISID…TERSLELKKD (69 aa).

The protein belongs to the RNA polymerase alpha chain family. Homodimer. The RNAP catalytic core consists of 2 alpha, 1 beta, 1 beta' and 1 omega subunit. When a sigma factor is associated with the core the holoenzyme is formed, which can initiate transcription.

The enzyme catalyses RNA(n) + a ribonucleoside 5'-triphosphate = RNA(n+1) + diphosphate. Functionally, DNA-dependent RNA polymerase catalyzes the transcription of DNA into RNA using the four ribonucleoside triphosphates as substrates. This Ureaplasma parvum serovar 3 (strain ATCC 700970) protein is DNA-directed RNA polymerase subunit alpha.